A 289-amino-acid chain; its full sequence is Diaminopimelate epimerase (289 aa).

3 residues coordinate substrate: N13, Q47, and N67. The active-site Proton donor is the C76. Substrate is bound by residues 77-78 (GN), N167, N200, and 218-219 (ER). C227 serves as the catalytic Proton acceptor. 228–229 (GT) is a binding site for substrate.

The protein belongs to the diaminopimelate epimerase family. In terms of assembly, homodimer.

It localises to the cytoplasm. It carries out the reaction (2S,6S)-2,6-diaminopimelate = meso-2,6-diaminopimelate. The protein operates within amino-acid biosynthesis; L-lysine biosynthesis via DAP pathway; DL-2,6-diaminopimelate from LL-2,6-diaminopimelate: step 1/1. Functionally, catalyzes the stereoinversion of LL-2,6-diaminopimelate (L,L-DAP) to meso-diaminopimelate (meso-DAP), a precursor of L-lysine and an essential component of the bacterial peptidoglycan. The chain is Diaminopimelate epimerase from Burkholderia pseudomallei (strain K96243).